Here is a 111-residue protein sequence, read N- to C-terminus: Large ribosomal subunit protein uL23 (111 aa).

This sequence belongs to the universal ribosomal protein uL23 family. As to quaternary structure, part of the 50S ribosomal subunit. Contacts protein L29, and trigger factor when it is bound to the ribosome.

One of the early assembly proteins it binds 23S rRNA. One of the proteins that surrounds the polypeptide exit tunnel on the outside of the ribosome. Forms the main docking site for trigger factor binding to the ribosome. This is Large ribosomal subunit protein uL23 from Nitrosospira multiformis (strain ATCC 25196 / NCIMB 11849 / C 71).